The sequence spans 771 residues: Probable exo-1,4-beta-xylosidase bxlB (771 aa).

An N-terminal signal peptide occupies residues 1–25 (MVGLTPQHYGNAIALMTYLASTALA). N-linked (GlcNAc...) asparagine glycosylation occurs at Asn-67. Asp-293 is an active-site residue. Residues Asn-305, Asn-345, Asn-423, Asn-462, and Asn-463 are each glycosylated (N-linked (GlcNAc...) asparagine).

Belongs to the glycosyl hydrolase 3 family.

It localises to the secreted. It catalyses the reaction Hydrolysis of (1-&gt;4)-beta-D-xylans, to remove successive D-xylose residues from the non-reducing termini.. The protein operates within glycan degradation; xylan degradation. Functionally, xylan 1,4-beta-xylosidase involved in the hydrolysis of xylan, a major structural heterogeneous polysaccharide found in plant biomass representing the second most abundant polysaccharide in the biosphere, after cellulose. The polypeptide is Probable exo-1,4-beta-xylosidase bxlB (bxlB) (Aspergillus clavatus (strain ATCC 1007 / CBS 513.65 / DSM 816 / NCTC 3887 / NRRL 1 / QM 1276 / 107)).